The primary structure comprises 324 residues: D-alanine--D-alanine ligase (324 aa).

The region spanning 121-321 is the ATP-grasp domain; sequence NQYLKAFGVR…IKDVMTDIIE (201 aa). 149–204 lines the ATP pocket; sequence VEKIGLPCFIKPNLGGSSFGVTKVKTREQIQPAIAKAFSEAEEVMIEAFMGGTELT. Residues Asp275, Glu288, and Asn290 each coordinate Mg(2+).

The protein belongs to the D-alanine--D-alanine ligase family. Mg(2+) is required as a cofactor. Requires Mn(2+) as cofactor.

The protein resides in the cytoplasm. It catalyses the reaction 2 D-alanine + ATP = D-alanyl-D-alanine + ADP + phosphate + H(+). Its pathway is cell wall biogenesis; peptidoglycan biosynthesis. Its function is as follows. Cell wall formation. This Bacteroides fragilis (strain ATCC 25285 / DSM 2151 / CCUG 4856 / JCM 11019 / LMG 10263 / NCTC 9343 / Onslow / VPI 2553 / EN-2) protein is D-alanine--D-alanine ligase.